We begin with the raw amino-acid sequence, 2604 residues long: BEACH domain-containing protein B (2604 aa).

Residues 1761 to 1912 (VGTSEVLTSV…NAKEVGMLIV (152 aa)) enclose the BEACH-type PH domain. The region spanning 1936 to 2226 (DRRIAMEMAE…QIFRKKHPRR (291 aa)) is the BEACH domain. 6 WD repeats span residues 2254 to 2293 (HSPSAVLYVGVVDSNIVLVNQGLTLSVKIWLTTQLHSGGN), 2368 to 2407 (HHKDVVSCVAVTADSTILATGSYDTTVMVWDILRMRTPEK), 2433 to 2474 (GHDD…RSLK), 2476 to 2515 (PSGSAVSKLAASHHGRIVLYGDDDLSLHLYSINGKHLASS), 2516 to 2557 (ESNG…KRYN), and 2558 to 2596 (GAGKIITSLTVTQEECFLAGTKDGALLVYSIENPQHRKP).

May be involved in the suppression of BCHC1 activity. The chain is BEACH domain-containing protein B from Arabidopsis thaliana (Mouse-ear cress).